A 484-amino-acid chain; its full sequence is ATP synthase subunit beta (484 aa).

Residues 104 to 123 (ERGPIGSKQTMPIHADAPPF) are disordered. 156-163 (GGAGVGKT) provides a ligand contact to ATP.

This sequence belongs to the ATPase alpha/beta chains family. In terms of assembly, F-type ATPases have 2 components, CF(1) - the catalytic core - and CF(0) - the membrane proton channel. CF(1) has five subunits: alpha(3), beta(3), gamma(1), delta(1), epsilon(1). CF(0) has three main subunits: a(1), b(2) and c(9-12). The alpha and beta chains form an alternating ring which encloses part of the gamma chain. CF(1) is attached to CF(0) by a central stalk formed by the gamma and epsilon chains, while a peripheral stalk is formed by the delta and b chains.

The protein resides in the cell inner membrane. The enzyme catalyses ATP + H2O + 4 H(+)(in) = ADP + phosphate + 5 H(+)(out). Its function is as follows. Produces ATP from ADP in the presence of a proton gradient across the membrane. The catalytic sites are hosted primarily by the beta subunits. The sequence is that of ATP synthase subunit beta from Zymomonas mobilis subsp. mobilis (strain ATCC 31821 / ZM4 / CP4).